The following is a 273-amino-acid chain: Alcohol dehydrogenase-related 31 kDa protein (273 aa).

11–34 contributes to the NAD(+) binding site; it reads YVADCGGIALETCKVLMTKNIAKL. Residue S139 participates in substrate binding. The Proton acceptor role is filled by Y152.

It belongs to the short-chain dehydrogenases/reductases (SDR) family.

This chain is Alcohol dehydrogenase-related 31 kDa protein (Adhr), found in Drosophila immigrans (Fruit fly).